The chain runs to 193 residues: Ion-translocating oxidoreductase complex subunit A (193 aa).

6 helical membrane passes run 5–25, 39–59, 62–82, 102–122, 134–154, and 170–190; these read LMLLLGTALVNNVVLVKFLGL, IGMGMATTFVLTLASALTWLI, FLLVPFDFGYLRILSFILVIA, VLGIYLPLITTNCAVLGVALL, VLYGFGSALGFTMVMVLFAGL, and APISFITAGLLSLAFMGFAGL.

This sequence belongs to the NqrDE/RnfAE family. In terms of assembly, the complex is composed of six subunits: RnfA, RnfB, RnfC, RnfD, RnfE and RnfG.

The protein resides in the cell inner membrane. Its function is as follows. Part of a membrane-bound complex that couples electron transfer with translocation of ions across the membrane. The polypeptide is Ion-translocating oxidoreductase complex subunit A (Azoarcus sp. (strain BH72)).